The chain runs to 127 residues: Fluoride-specific ion channel FluC (127 aa).

Helical transmembrane passes span 28–48, 73–93, and 98–118; these read LALF…SLAM, TGVL…ALLI, and VGLA…GLFL. The Na(+) site is built by G77 and T80.

It belongs to the fluoride channel Fluc/FEX (TC 1.A.43) family.

It is found in the cell inner membrane. It carries out the reaction fluoride(in) = fluoride(out). With respect to regulation, na(+) is not transported, but it plays an essential structural role and its presence is essential for fluoride channel function. Its function is as follows. Fluoride-specific ion channel. Important for reducing fluoride concentration in the cell, thus reducing its toxicity. This chain is Fluoride-specific ion channel FluC, found in Beijerinckia indica subsp. indica (strain ATCC 9039 / DSM 1715 / NCIMB 8712).